A 430-amino-acid chain; its full sequence is Enolase (430 aa).

Gln164 is a binding site for (2R)-2-phosphoglycerate. The active-site Proton donor is the Glu208. Residues Asp245, Glu288, and Asp315 each contribute to the Mg(2+) site. Positions 340, 369, 370, and 391 each coordinate (2R)-2-phosphoglycerate. The Proton acceptor role is filled by Lys340.

The protein belongs to the enolase family. Requires Mg(2+) as cofactor.

It localises to the cytoplasm. The protein localises to the secreted. Its subcellular location is the cell surface. It catalyses the reaction (2R)-2-phosphoglycerate = phosphoenolpyruvate + H2O. The protein operates within carbohydrate degradation; glycolysis; pyruvate from D-glyceraldehyde 3-phosphate: step 4/5. Catalyzes the reversible conversion of 2-phosphoglycerate (2-PG) into phosphoenolpyruvate (PEP). It is essential for the degradation of carbohydrates via glycolysis. The protein is Enolase of Thermococcus gammatolerans (strain DSM 15229 / JCM 11827 / EJ3).